A 324-amino-acid polypeptide reads, in one-letter code: Biotin synthase 1 (324 aa).

One can recognise a Radical SAM core domain in the interval 37-256; that stretch reads NAIETASLLS…VALARILMPA (220 aa). The [4Fe-4S] cluster site is built by cysteine 52, cysteine 56, and cysteine 59. 4 residues coordinate [2Fe-2S] cluster: cysteine 96, cysteine 127, cysteine 187, and arginine 260.

The protein belongs to the radical SAM superfamily. Biotin synthase family. As to quaternary structure, homodimer. [4Fe-4S] cluster serves as cofactor. The cofactor is [2Fe-2S] cluster.

It carries out the reaction (4R,5S)-dethiobiotin + (sulfur carrier)-SH + 2 reduced [2Fe-2S]-[ferredoxin] + 2 S-adenosyl-L-methionine = (sulfur carrier)-H + biotin + 2 5'-deoxyadenosine + 2 L-methionine + 2 oxidized [2Fe-2S]-[ferredoxin]. It participates in cofactor biosynthesis; biotin biosynthesis; biotin from 7,8-diaminononanoate: step 2/2. Catalyzes the conversion of dethiobiotin (DTB) to biotin by the insertion of a sulfur atom into dethiobiotin via a radical-based mechanism. In Paracoccus denitrificans (strain Pd 1222), this protein is Biotin synthase 1.